Reading from the N-terminus, the 325-residue chain is NAD kinase (325 aa).

Asp91 functions as the Proton acceptor in the catalytic mechanism. NAD(+)-binding positions include 91–92 (DG), His96, 165–166 (ND), His176, His193, Asp195, and 206–211 (TAYALS).

The protein belongs to the NAD kinase family. A divalent metal cation serves as cofactor.

It localises to the cytoplasm. It catalyses the reaction NAD(+) + ATP = ADP + NADP(+) + H(+). Functionally, involved in the regulation of the intracellular balance of NAD and NADP, and is a key enzyme in the biosynthesis of NADP. Catalyzes specifically the phosphorylation on 2'-hydroxyl of the adenosine moiety of NAD to yield NADP. In Psychrobacter arcticus (strain DSM 17307 / VKM B-2377 / 273-4), this protein is NAD kinase.